Reading from the N-terminus, the 378-residue chain is Glutamate 5-kinase (378 aa).

ATP is bound at residue Lys-14. Ser-54, Asp-141, and Asn-153 together coordinate substrate. Position 173–174 (173–174 (SD)) interacts with ATP. Residues 279 to 356 (AGRLTVDAGA…DEISAILGYD (78 aa)) form the PUA domain.

This sequence belongs to the glutamate 5-kinase family.

It is found in the cytoplasm. The enzyme catalyses L-glutamate + ATP = L-glutamyl 5-phosphate + ADP. It participates in amino-acid biosynthesis; L-proline biosynthesis; L-glutamate 5-semialdehyde from L-glutamate: step 1/2. In terms of biological role, catalyzes the transfer of a phosphate group to glutamate to form L-glutamate 5-phosphate. The polypeptide is Glutamate 5-kinase (Brucella abortus (strain S19)).